We begin with the raw amino-acid sequence, 890 residues long: Alanine--tRNA ligase (890 aa).

Positions 572, 576, 674, and 678 each coordinate Zn(2+).

It belongs to the class-II aminoacyl-tRNA synthetase family. The cofactor is Zn(2+).

The protein localises to the cytoplasm. The enzyme catalyses tRNA(Ala) + L-alanine + ATP = L-alanyl-tRNA(Ala) + AMP + diphosphate. In terms of biological role, catalyzes the attachment of alanine to tRNA(Ala) in a two-step reaction: alanine is first activated by ATP to form Ala-AMP and then transferred to the acceptor end of tRNA(Ala). Also edits incorrectly charged Ser-tRNA(Ala) and Gly-tRNA(Ala) via its editing domain. The chain is Alanine--tRNA ligase from Prochlorococcus marinus (strain MIT 9211).